The chain runs to 236 residues: MPTILVINPNSSTFITTSMEEKLVPLVPSDVKLRFLTCPQPGAAVIDSITEATLTAALVFQALTPSVLDGVDAIAVACYSPTPLVDMIRESFALPCMGIVQASVLSALSVGQRIGILTSTYRSECLLYELLDSFGVSRTRVAAIASTGRTVLQLSQMPSQERETLLVQKAQELANTKGADVICLGGAALAAIRDQIQVAVGPNIPIIDGVHAAVELLAGLARQNLHTSKFGIYTYP.

It belongs to the HyuE racemase family.

It is found in the cytoplasm. This is an uncharacterized protein from Schizosaccharomyces pombe (strain 972 / ATCC 24843) (Fission yeast).